The sequence spans 269 residues: Voltage-gated hydrogen channel 1 (269 aa).

At 1 to 96 (MTSHDPKAVT…RLRKLFSSHR (96 aa)) the chain is on the cytoplasmic side. Threonine 29 carries the post-translational modification Phosphothreonine. Positions 46–79 (ENEEEEEEPAPTSAEGEGNAEGPDAEAGSASTPR) are disordered. A Phosphoserine modification is found at serine 93. The helical transmembrane segment at 97–117 (FQVIIICLVVLDALLVLAELL) threads the bilayer. The Extracellular portion of the chain corresponds to 118–134 (LDLKIIEPDEQDYAVTA). A helical transmembrane segment spans residues 135–157 (FHYMSFAILVFFMLEIFFKIFVF). Residues 158–165 (RLEFFHHK) lie on the Cytoplasmic side of the membrane. Residues 166–186 (FEILDAFVVVVSFVLDLVLLF) traverse the membrane as a helical segment. Over 187-193 (KSHHFEA) the chain is Extracellular. Residues 194-214 (LGLLILLRLWRVARIINGIII) traverse the membrane as a helical segment. The Cytoplasmic portion of the chain corresponds to 215-269 (SVKTRSERQILRLKQINIQLATKIQHLEFSCSEKEQEIERLNKLLKQNGLLGDVN). A coiled-coil region spans residues 221-261 (ERQILRLKQINIQLATKIQHLEFSCSEKEQEIERLNKLLKQ).

Belongs to the voltage-gated proton channel (VPC) (TC 1.A.51) family. As to quaternary structure, homodimer; each protomer forms its own proton conduction pathway. In terms of processing, phosphorylated in vitro by PRKCD. Phosphorylation may enhance channel gating. Enriched in immune tissues, such as bone marrow, macrophages and spleen.

The protein resides in the cell membrane. It is found in the apical cell membrane. The protein localises to the cytoplasmic vesicle. Its subcellular location is the phagosome membrane. It localises to the cell projection. The protein resides in the cilium. It is found in the flagellum membrane. The catalysed reaction is H(+)(in) = H(+)(out). The dimers display cooperative channel gating. The channel activity is inhibited by zinc ions. Voltage-gated proton-selective channel that conducts outward proton currents in response to intracellular acidification. Lacks a canonical ion-channel pore domain and mediates proton permeability via its voltage sensor domain. Provides for proton efflux that compensates for electron charge generated by NADPH oxidase activity either in the extracellular or phagosomal compartments, thus enabling the production of high levels of bactericidal reactive oxygen species during the respiratory burst. Opens when the pH of airway surface liquid exceeds 7 and contributes to respiratory epithelial acid secretion to maintain pH in the mucosa. The sequence is that of Voltage-gated hydrogen channel 1 from Mus musculus (Mouse).